A 423-amino-acid chain; its full sequence is Serine--tRNA ligase (423 aa).

A compositionally biased stretch (basic and acidic residues) spans 1–12; sequence MIDLKALRENPD. A disordered region spans residues 1–26; it reads MIDLKALRENPDVGRASQRSRGEDPE. Residue 230–232 coordinates L-serine; it reads TSE. ATP is bound by residues 261-263 and Val-277; that span reads RRE. An L-serine-binding site is contributed by Glu-284. 348–351 serves as a coordination point for ATP; the sequence is ELTS. Position 383 (Thr-383) interacts with L-serine.

Belongs to the class-II aminoacyl-tRNA synthetase family. Type-1 seryl-tRNA synthetase subfamily. As to quaternary structure, homodimer. The tRNA molecule binds across the dimer.

It localises to the cytoplasm. The catalysed reaction is tRNA(Ser) + L-serine + ATP = L-seryl-tRNA(Ser) + AMP + diphosphate + H(+). It catalyses the reaction tRNA(Sec) + L-serine + ATP = L-seryl-tRNA(Sec) + AMP + diphosphate + H(+). It functions in the pathway aminoacyl-tRNA biosynthesis; selenocysteinyl-tRNA(Sec) biosynthesis; L-seryl-tRNA(Sec) from L-serine and tRNA(Sec): step 1/1. Its function is as follows. Catalyzes the attachment of serine to tRNA(Ser). Is also able to aminoacylate tRNA(Sec) with serine, to form the misacylated tRNA L-seryl-tRNA(Sec), which will be further converted into selenocysteinyl-tRNA(Sec). This chain is Serine--tRNA ligase, found in Beutenbergia cavernae (strain ATCC BAA-8 / DSM 12333 / CCUG 43141 / JCM 11478 / NBRC 16432 / NCIMB 13614 / HKI 0122).